The following is a 268-amino-acid chain: Tropinone reductase homolog At2g29370 (268 aa).

22-46 (LVTGGSKGLGKAVVEELAMLGARVH) is an NADP(+) binding site. Ser155 lines the substrate pocket. Tyr168 (proton acceptor) is an active-site residue.

It belongs to the short-chain dehydrogenases/reductases (SDR) family. SDR65C subfamily.

The sequence is that of Tropinone reductase homolog At2g29370 from Arabidopsis thaliana (Mouse-ear cress).